The chain runs to 82 residues: Large ribosomal subunit protein bL31 (82 aa).

It belongs to the bacterial ribosomal protein bL31 family. Type A subfamily. In terms of assembly, part of the 50S ribosomal subunit.

Binds the 23S rRNA. This is Large ribosomal subunit protein bL31 from Rippkaea orientalis (strain PCC 8801 / RF-1) (Cyanothece sp. (strain PCC 8801)).